The primary structure comprises 317 residues: (R)-citramalyl-CoA lyase (317 aa).

Positions 4 to 281 (VTIVDVAPRD…PTGIDLSALI (278 aa)) constitute a Pyruvate carboxyltransferase domain. Arg12 is a substrate binding site. A divalent metal cation-binding residues include Asp13, His214, and His216. The active site involves Cys247. Asn256 lines the a divalent metal cation pocket.

The protein belongs to the HMG-CoA lyase family. As to quaternary structure, homodimer. It depends on Mn(2+) as a cofactor. Co(2+) serves as cofactor. Ni(2+) is required as a cofactor. Requires Mg(2+) as cofactor.

It catalyses the reaction (3R)-citramalyl-CoA = pyruvate + acetyl-CoA. Activated by dithioerythritol (DTE) (in vitro). Functionally, involved in the glyoxylate assimilation cycle used to regenerate acetyl-CoA and produce pyruvate as universal precursor for biosynthesis. Catalyzes the cleavage of (R)-citramalyl-CoA to yield acetyl-CoA and pyruvate. This is (R)-citramalyl-CoA lyase (ccl) from Chloroflexus aurantiacus (strain ATCC 29366 / DSM 635 / J-10-fl).